The following is a 621-amino-acid chain: F-box/LRR-repeat protein 4 (621 aa).

Arg28 is modified (asymmetric dimethylarginine). An F-box domain is found at 277 to 332 (NGYFDKLPYELIQLILNHLSLPDLCRLAQTCRLLHQHCCDPLQYIHLNLQPYWARL). 9 LRR repeats span residues 376-397 (ELVR…EVIS), 402-421 (NLQD…AFGH), 427-448 (SLKR…SILN), 452-474 (ELQH…ASMI), 480-501 (NLRT…AELA), 504-524 (CVLL…STGC), 532-558 (LPNL…ASNC), 559-583 (TRLQ…LLES), and 584-609 (CKDL…LNAS).

Part of a SCF (SKP1-CUL1-F-box) protein ligase complex. Interacts with FAF2 and VCP. Interacts with PPTC7; this interaction promotes destruction of BNIP3 and NIX and mitophagy suppression.

It is found in the cytoplasm. It localises to the nucleus. Its subcellular location is the mitochondrion outer membrane. Functionally, substrate-recognition component of the mitochondria-localized SCF-FBXL4 ubiquitin E3 ligase complex that plays a role in the restriction of mitophagy by controlling the degradation of BNIP3 and NIX mitophagy receptors. Also rescues mitochondrial injury through reverting hyperactivation of DRP1-mediated mitochondrial fission. This chain is F-box/LRR-repeat protein 4 (Fbxl4), found in Mus musculus (Mouse).